Consider the following 309-residue polypeptide: Protein FdhE homolog (309 aa).

Belongs to the FdhE family.

Its subcellular location is the cytoplasm. Its function is as follows. Necessary for formate dehydrogenase activity. The sequence is that of Protein FdhE homolog from Enterobacter sp. (strain 638).